Here is a 326-residue protein sequence, read N- to C-terminus: Phospho-N-acetylmuramoyl-pentapeptide-transferase (326 aa).

9 helical membrane passes run 3–23, 51–71, 79–99, 115–135, 138–158, 169–189, 195–215, 221–243, and 306–326; these read ISIS…PAFI, TMGG…LALF, VGMI…DDFL, LALQ…GGDM, VFSY…FWLV, GIDG…GVIA, MDIL…FVFN, VFMG…MALH, and FFFW…LYLM.

Belongs to the glycosyltransferase 4 family. MraY subfamily. Requires Mg(2+) as cofactor.

It localises to the cell membrane. The enzyme catalyses UDP-N-acetyl-alpha-D-muramoyl-L-alanyl-gamma-D-glutamyl-L-lysyl-D-alanyl-D-alanine + di-trans,octa-cis-undecaprenyl phosphate = Mur2Ac(oyl-L-Ala-gamma-D-Glu-L-Lys-D-Ala-D-Ala)-di-trans,octa-cis-undecaprenyl diphosphate + UMP. It functions in the pathway cell wall biogenesis; peptidoglycan biosynthesis. Its function is as follows. Catalyzes the initial step of the lipid cycle reactions in the biosynthesis of the cell wall peptidoglycan: transfers peptidoglycan precursor phospho-MurNAc-pentapeptide from UDP-MurNAc-pentapeptide onto the lipid carrier undecaprenyl phosphate, yielding undecaprenyl-pyrophosphoryl-MurNAc-pentapeptide, known as lipid I. This is Phospho-N-acetylmuramoyl-pentapeptide-transferase from Streptococcus pneumoniae (strain ATCC 700669 / Spain 23F-1).